Consider the following 73-residue polypeptide: Conotoxin reg3a (73 aa).

Positions 1-20 (MMSKLRVLLTICLLLFPLSA) are cleaved as a signal peptide. Positions 21-55 (LPLDGDQPADQPAKRMWNGKLAARKPRFDKYDLVR) are excised as a propeptide. P59, P60, P65, and P70 each carry 4-hydroxyproline. At C72 the chain carries Cysteine amide.

In terms of processing, contains 3 disulfide bonds. Expressed by the venom duct.

It localises to the secreted. The chain is Conotoxin reg3a from Conus regius (Crown cone).